The sequence spans 350 residues: Methionine import ATP-binding protein MetN 1 (350 aa).

Residues 12–251 form the ABC transporter domain; the sequence is IDLKNITVLF…PSREVTQDFV (240 aa). 48 to 55 contributes to the ATP binding site; it reads GYSGAGKS.

Belongs to the ABC transporter superfamily. Methionine importer (TC 3.A.1.24) family. As to quaternary structure, the complex is composed of two ATP-binding proteins (MetN), two transmembrane proteins (MetI) and a solute-binding protein (MetQ).

It localises to the cell membrane. The enzyme catalyses L-methionine(out) + ATP + H2O = L-methionine(in) + ADP + phosphate + H(+). It catalyses the reaction D-methionine(out) + ATP + H2O = D-methionine(in) + ADP + phosphate + H(+). Its function is as follows. Part of the ABC transporter complex MetNIQ involved in methionine import. Responsible for energy coupling to the transport system. This is Methionine import ATP-binding protein MetN 1 from Oenococcus oeni (strain ATCC BAA-331 / PSU-1).